A 304-amino-acid chain; its full sequence is Probable intron-encoded endonuclease 1 (304 aa).

The region spanning 84-175 is the GIY-YIG domain; it reads DKGGIYSFIN…RFNFDNLYNF (92 aa).

This sequence to endonucleases of group I introns of fungi and phage.

The protein resides in the mitochondrion. Functionally, mitochondrial DNA endonuclease involved in intron homing. In Neurospora crassa (strain ATCC 24698 / 74-OR23-1A / CBS 708.71 / DSM 1257 / FGSC 987), this protein is Probable intron-encoded endonuclease 1.